Consider the following 868-residue polypeptide: Probable inorganic carbon transporter subunit DabA (868 aa).

Residues C392, D394, H574, and C589 each contribute to the Zn(2+) site.

It belongs to the inorganic carbon transporter (TC 9.A.2) DabA family. As to quaternary structure, forms a complex with DabB. Zn(2+) serves as cofactor.

It localises to the cell membrane. Part of an energy-coupled inorganic carbon pump. The chain is Probable inorganic carbon transporter subunit DabA from Bacillus cereus (strain B4264).